The sequence spans 451 residues: Probable carboxypeptidase PMAA_093910 (451 aa).

The first 19 residues, 1–19 (MKVSSLLPSVLLLVGATRA), serve as a signal peptide directing secretion. N149 carries N-linked (GlcNAc...) asparagine glycosylation. D171 lines the Zn(2+) pocket. The active-site Proton acceptor is the E203. E204 is a binding site for Zn(2+). N354 is a glycosylation site (N-linked (GlcNAc...) asparagine).

Belongs to the peptidase M20A family. Zn(2+) serves as cofactor.

The protein resides in the secreted. The sequence is that of Probable carboxypeptidase PMAA_093910 from Talaromyces marneffei (strain ATCC 18224 / CBS 334.59 / QM 7333) (Penicillium marneffei).